Reading from the N-terminus, the 361-residue chain is tRNA-specific 2-thiouridylase MnmA (361 aa).

ATP contacts are provided by residues 8 to 15 (AMSGGVDS) and Met35. Positions 95–97 (NPD) are interaction with target base in tRNA. Cys100 (nucleophile) is an active-site residue. An intrachain disulfide couples Cys100 to Cys196. Gly124 serves as a coordination point for ATP. The interval 146-148 (KDQ) is interaction with tRNA. Cys196 acts as the Cysteine persulfide intermediate in catalysis. Positions 303 to 304 (RY) are interaction with tRNA.

Belongs to the MnmA/TRMU family.

The protein resides in the cytoplasm. It carries out the reaction S-sulfanyl-L-cysteinyl-[protein] + uridine(34) in tRNA + AH2 + ATP = 2-thiouridine(34) in tRNA + L-cysteinyl-[protein] + A + AMP + diphosphate + H(+). Catalyzes the 2-thiolation of uridine at the wobble position (U34) of tRNA, leading to the formation of s(2)U34. The chain is tRNA-specific 2-thiouridylase MnmA from Chlamydia pneumoniae (Chlamydophila pneumoniae).